We begin with the raw amino-acid sequence, 98 residues long: NADH-ubiquinone oxidoreductase chain 4L (98 aa).

Transmembrane regions (helical) follow at residues methionine 1 to valine 21, leucine 30 to isoleucine 50, and isoleucine 61 to valine 81.

It belongs to the complex I subunit 4L family. In terms of assembly, core subunit of respiratory chain NADH dehydrogenase (Complex I) which is composed of 45 different subunits.

The protein resides in the mitochondrion inner membrane. The enzyme catalyses a ubiquinone + NADH + 5 H(+)(in) = a ubiquinol + NAD(+) + 4 H(+)(out). In terms of biological role, core subunit of the mitochondrial membrane respiratory chain NADH dehydrogenase (Complex I) which catalyzes electron transfer from NADH through the respiratory chain, using ubiquinone as an electron acceptor. Part of the enzyme membrane arm which is embedded in the lipid bilayer and involved in proton translocation. This Pagophilus groenlandicus (Harp seal) protein is NADH-ubiquinone oxidoreductase chain 4L (MT-ND4L).